Consider the following 149-residue polypeptide: Large ribosomal subunit protein bL9 (149 aa).

The protein belongs to the bacterial ribosomal protein bL9 family.

In terms of biological role, binds to the 23S rRNA. This chain is Large ribosomal subunit protein bL9, found in Teredinibacter turnerae (strain ATCC 39867 / T7901).